A 379-amino-acid polypeptide reads, in one-letter code: Protein RecA (379 aa).

79–86 (GPESSGKT) provides a ligand contact to ATP.

It belongs to the RecA family.

It localises to the cytoplasm. Its function is as follows. Can catalyze the hydrolysis of ATP in the presence of single-stranded DNA, the ATP-dependent uptake of single-stranded DNA by duplex DNA, and the ATP-dependent hybridization of homologous single-stranded DNAs. It interacts with LexA causing its activation and leading to its autocatalytic cleavage. This chain is Protein RecA, found in Streptococcus uberis (strain ATCC BAA-854 / 0140J).